We begin with the raw amino-acid sequence, 227 residues long: 2,3-bisphosphoglycerate-dependent phosphoglycerate mutase (227 aa).

Substrate is bound by residues 7 to 14 (RHGQSEWN), 20 to 21 (TG), Arg-59, 86 to 89 (ERHY), Lys-97, 113 to 114 (RR), and 182 to 183 (GN). Residue His-8 is the Tele-phosphohistidine intermediate of the active site. Catalysis depends on Glu-86, which acts as the Proton donor/acceptor.

It belongs to the phosphoglycerate mutase family. BPG-dependent PGAM subfamily. As to quaternary structure, homodimer.

It carries out the reaction (2R)-2-phosphoglycerate = (2R)-3-phosphoglycerate. It functions in the pathway carbohydrate degradation; glycolysis; pyruvate from D-glyceraldehyde 3-phosphate: step 3/5. Functionally, catalyzes the interconversion of 2-phosphoglycerate and 3-phosphoglycerate. The sequence is that of 2,3-bisphosphoglycerate-dependent phosphoglycerate mutase from Neisseria meningitidis serogroup A / serotype 4A (strain DSM 15465 / Z2491).